A 189-amino-acid polypeptide reads, in one-letter code: Crossover junction endodeoxyribonuclease RuvC (189 aa).

Residues Asp-7, Glu-68, and Asp-141 contribute to the active site. Residues Asp-7, Glu-68, and Asp-141 each coordinate Mg(2+).

The protein belongs to the RuvC family. As to quaternary structure, homodimer which binds Holliday junction (HJ) DNA. The HJ becomes 2-fold symmetrical on binding to RuvC with unstacked arms; it has a different conformation from HJ DNA in complex with RuvA. In the full resolvosome a probable DNA-RuvA(4)-RuvB(12)-RuvC(2) complex forms which resolves the HJ. Requires Mg(2+) as cofactor.

Its subcellular location is the cytoplasm. It catalyses the reaction Endonucleolytic cleavage at a junction such as a reciprocal single-stranded crossover between two homologous DNA duplexes (Holliday junction).. In terms of biological role, the RuvA-RuvB-RuvC complex processes Holliday junction (HJ) DNA during genetic recombination and DNA repair. Endonuclease that resolves HJ intermediates. Cleaves cruciform DNA by making single-stranded nicks across the HJ at symmetrical positions within the homologous arms, yielding a 5'-phosphate and a 3'-hydroxyl group; requires a central core of homology in the junction. The consensus cleavage sequence is 5'-(A/T)TT(C/G)-3'. Cleavage occurs on the 3'-side of the TT dinucleotide at the point of strand exchange. HJ branch migration catalyzed by RuvA-RuvB allows RuvC to scan DNA until it finds its consensus sequence, where it cleaves and resolves the cruciform DNA. This chain is Crossover junction endodeoxyribonuclease RuvC, found in Rhodococcus opacus (strain B4).